Consider the following 446-residue polypeptide: C-type lectin domain family 18 member A (446 aa).

Residues 1-26 (MLHPETSPGRGHLLAVLLALLGTAWA) form the signal peptide. Residues 52–182 (LSLHNRLRSW…AAIEAFVCAY (131 aa)) form the SCP domain. Asn-144 is a glycosylation site (N-linked (GlcNAc...) asparagine). In terms of domain architecture, EGF-like spans 228–261 (PRNPCRMSCQNHGRLNISTCHCHCPPGYTGRYCQ). Cystine bridges form between Cys-236-Cys-249, Cys-251-Cys-260, Cys-327-Cys-432, and Cys-408-Cys-424. In terms of domain architecture, C-type lectin spans 306 to 433 (IDGDCFMVSS…CKTRNRYICQ (128 aa)).

N-glycosylated. As to expression, dectected in all cell lines tested and in peripheral blood cells.

It localises to the secreted. The protein resides in the endoplasmic reticulum. The protein localises to the golgi apparatus. It is found in the endosome. In terms of biological role, binds polysaccharides in a Ca(2+)-independent manner with a preferentially binding to fucoidan, beta-glucans and galactans. This is C-type lectin domain family 18 member A (CLEC18A) from Homo sapiens (Human).